A 288-amino-acid polypeptide reads, in one-letter code: Putative branched-chain-amino-acid aminotransferase (288 aa).

Lys-146 carries the N6-(pyridoxal phosphate)lysine modification.

It belongs to the class-IV pyridoxal-phosphate-dependent aminotransferase family. It depends on pyridoxal 5'-phosphate as a cofactor.

It catalyses the reaction L-leucine + 2-oxoglutarate = 4-methyl-2-oxopentanoate + L-glutamate. It carries out the reaction L-isoleucine + 2-oxoglutarate = (S)-3-methyl-2-oxopentanoate + L-glutamate. The catalysed reaction is L-valine + 2-oxoglutarate = 3-methyl-2-oxobutanoate + L-glutamate. The protein operates within amino-acid biosynthesis; L-isoleucine biosynthesis; L-isoleucine from 2-oxobutanoate: step 4/4. Its pathway is amino-acid biosynthesis; L-leucine biosynthesis; L-leucine from 3-methyl-2-oxobutanoate: step 4/4. It functions in the pathway amino-acid biosynthesis; L-valine biosynthesis; L-valine from pyruvate: step 4/4. Functionally, acts on leucine, isoleucine and valine. The sequence is that of Putative branched-chain-amino-acid aminotransferase (ilvE) from Methanocaldococcus jannaschii (strain ATCC 43067 / DSM 2661 / JAL-1 / JCM 10045 / NBRC 100440) (Methanococcus jannaschii).